The chain runs to 430 residues: von Willebrand factor (430 aa).

N6 is a glycosylation site (N-linked (GlcNAc...) asparagine). A disulfide bond links C9 and C12. 3 O-linked (GalNAc...) threonine glycosylation sites follow: T23, T30, and T31. An intrachain disulfide couples C47 to C233. Residues 52-228 (DLVFLLDGSY…DELEQRRDEI (177 aa)) form the VWFA 1; binding site for platelet glycoprotein Ib domain. O-linked (GalNAc...) threonine glycosylation is present at T252. O-linked (GalNAc...) serine glycosylation is present at S261. The VWFA 2 domain maps to 273–430 (DVVFVLEASD…ITPIFIQDFE (158 aa)). N290 and N349 each carry an N-linked (GlcNAc...) asparagine glycan.

Multimeric. Interacts with F8. N- and O-glycosylated. Plasma.

The protein localises to the secreted. It is found in the extracellular space. It localises to the extracellular matrix. Important in the maintenance of hemostasis, it promotes adhesion of platelets to the sites of vascular injury by forming a molecular bridge between sub-endothelial collagen matrix and platelet-surface receptor complex GPIb-IX-V. Also acts as a chaperone for coagulation factor VIII, delivering it to the site of injury, stabilizing its heterodimeric structure and protecting it from premature clearance from plasma. The chain is von Willebrand factor from Rattus norvegicus (Rat).